We begin with the raw amino-acid sequence, 324 residues long: Glyoxylate/hydroxypyruvate reductase B (324 aa).

Residues Arg-237 and Glu-266 contribute to the active site. His-285 serves as the catalytic Proton donor.

This sequence belongs to the D-isomer specific 2-hydroxyacid dehydrogenase family. GhrB subfamily. In terms of assembly, homodimer.

It localises to the cytoplasm. It carries out the reaction glycolate + NADP(+) = glyoxylate + NADPH + H(+). The enzyme catalyses (R)-glycerate + NAD(+) = 3-hydroxypyruvate + NADH + H(+). The catalysed reaction is (R)-glycerate + NADP(+) = 3-hydroxypyruvate + NADPH + H(+). Functionally, catalyzes the NADPH-dependent reduction of glyoxylate and hydroxypyruvate into glycolate and glycerate, respectively. In Salmonella schwarzengrund (strain CVM19633), this protein is Glyoxylate/hydroxypyruvate reductase B.